A 222-amino-acid polypeptide reads, in one-letter code: Countin-3 (222 aa).

The N-terminal stretch at 1–20 is a signal peptide; the sequence is MNKILSLFLITILLISKVMS. Residues 21–105 enclose the Saposin B-type domain; that stretch reads SSEECKLCTD…ESVKMCQYND (85 aa). 3 disulfide bridges follow: C25-C101, C28-C95, and C56-C68. N-linked (GlcNAc...) asparagine glycans are attached at residues N108, N134, and N218.

Belongs to the countin family.

It is found in the secreted. Functionally, may control the size of the multicellular structure. This Dictyostelium discoideum (Social amoeba) protein is Countin-3 (ctnC).